A 204-amino-acid polypeptide reads, in one-letter code: Somatotropin (204 aa).

Positions 1 to 17 (MNSVVLLLSVVCLGVSS) are cleaved as a signal peptide. Q18 bears the Pyrrolidone carboxylic acid mark. H36 contacts Zn(2+). The cysteines at positions 69 and 177 are disulfide-linked. E186 provides a ligand contact to Zn(2+). Residues C194 and C202 are joined by a disulfide bond.

Belongs to the somatotropin/prolactin family.

The protein localises to the secreted. Growth hormone plays an important role in growth control and involved in the regulation of several anabolic processes. The polypeptide is Somatotropin (gh) (Oreochromis niloticus (Nile tilapia)).